Consider the following 397-residue polypeptide: Transcription factor TGAL6 (397 aa).

Residues 104-148 (PDKVLRRLAQNREAARKSRLRKKAYIQQLETSRLKLAQLEQELQR) form the bZIP domain. A basic motif region spans residues 106–126 (KVLRRLAQNREAARKSRLRKK). The interval 132–146 (LETSRLKLAQLEQEL) is leucine-zipper. The region spanning 175-390 (ALGFEIKYSH…RALSSLWAAR (216 aa)) is the DOG1 domain.

Belongs to the bZIP family.

The protein localises to the nucleus. In terms of biological role, transcriptional regulator involved in defense response. The polypeptide is Transcription factor TGAL6 (Oryza sativa subsp. japonica (Rice)).